The following is a 143-amino-acid chain: Agaricus bisporus lectin (143 aa).

The beta-D-Gal-(1-&gt;3)-alpha-D-GalNAc site is built by Ala29, Ser48, Gly49, and Asn73. Thr82, Arg103, and Tyr114 together coordinate N-acetyl-beta-D-glucosamine.

This sequence belongs to the fungal fruit body lectin family. As to quaternary structure, homotetramer.

Its function is as follows. Lectin that recognizes O-linked galactose-beta-1,3-N-acetylgalactosamine, a disaccharide (Thomsen-Friedenreich antigen or T-disaccharide), present on cell surface glycoproteins. Can also bind galactose-beta-1,3-N-acetylglucosamine. Does not bind monosaccharides. Can be internalized by clathrin-coated vesicles after binding to surface glycoproteins. After internalization it inhibits nuclear import of nuclear localization signal dependent proteins. Inhibits proliferation of malignant cells without cytotoxicity for normal cells. This chain is Agaricus bisporus lectin, found in Agaricus bisporus (White button mushroom).